Reading from the N-terminus, the 485-residue chain is Aspartyl/glutamyl-tRNA(Asn/Gln) amidotransferase subunit B (485 aa).

The protein belongs to the GatB/GatE family. GatB subfamily. In terms of assembly, heterotrimer of A, B and C subunits.

The catalysed reaction is L-glutamyl-tRNA(Gln) + L-glutamine + ATP + H2O = L-glutaminyl-tRNA(Gln) + L-glutamate + ADP + phosphate + H(+). It carries out the reaction L-aspartyl-tRNA(Asn) + L-glutamine + ATP + H2O = L-asparaginyl-tRNA(Asn) + L-glutamate + ADP + phosphate + 2 H(+). Allows the formation of correctly charged Asn-tRNA(Asn) or Gln-tRNA(Gln) through the transamidation of misacylated Asp-tRNA(Asn) or Glu-tRNA(Gln) in organisms which lack either or both of asparaginyl-tRNA or glutaminyl-tRNA synthetases. The reaction takes place in the presence of glutamine and ATP through an activated phospho-Asp-tRNA(Asn) or phospho-Glu-tRNA(Gln). The protein is Aspartyl/glutamyl-tRNA(Asn/Gln) amidotransferase subunit B of Cupriavidus taiwanensis (strain DSM 17343 / BCRC 17206 / CCUG 44338 / CIP 107171 / LMG 19424 / R1) (Ralstonia taiwanensis (strain LMG 19424)).